The sequence spans 151 residues: HTH-type transcriptional regulator FL11 (151 aa).

The 62-residue stretch at 5–66 (LDEIDRRIIK…IVNPEALGYS (62 aa)) folds into the HTH asnC-type domain. Positions 24-43 (LREISKITGLAESTIHERIK) form a DNA-binding region, H-T-H motif. L-arginine is bound at residue 98–104 (ETTGDYD). L-lysine is bound by residues Asn-118, Asp-122, and 133–135 (THT). L-arginine contacts are provided by residues Asp-122 and 133–135 (THT).

Homodimer. Binds DNA as a dimer and an octamer.

Its activity is regulated as follows. In the famine mode, FL11 forms dimers and acts as a repressor, leading to growth arrest. In the feast mode, in the presence of high concentrations of lysine or arginine, four dimers assemble into an octamer and cover the fl11 and lysine biosynthesis promoters. This leads to the inhibition of fl11 expression and lysine biosynthesis, decrease of the FL11 concentration in the cell, derepression of the target genes and activation of the metabolism. Its function is as follows. DNA-binding protein involved in the repression of transcription of a large number of genes, thereby arresting growth, in response to environmental changes. The protein is HTH-type transcriptional regulator FL11 of Pyrococcus abyssi (strain GE5 / Orsay).